Here is a 179-residue protein sequence, read N- to C-terminus: Cytoglobin-2 (179 aa).

Over residues 1 to 11 the composition is skewed to acidic residues; that stretch reads MEKEREDEETE. A disordered region spans residues 1–20; sequence MEKEREDEETEGRERPEPLT. The region spanning 18 to 167 is the Globin domain; sequence PLTDVERGII…LYWHITGAYT (150 aa). Residues H81 and H113 each contribute to the heme b site.

This sequence belongs to the globin family. As to quaternary structure, monomeric. Expressed in all tissues examined, with highest levels in brain and eye, and considerably lower levels in skin, gut, heart, gill, liver and muscle.

Its subcellular location is the cytoplasm. The protein resides in the nucleus. The catalysed reaction is Fe(II)-heme b-[protein] + nitric oxide + O2 = Fe(III)-heme b-[protein] + nitrate. It carries out the reaction Fe(III)-heme b-[protein] + nitric oxide + H2O = Fe(II)-heme b-[protein] + nitrite + 2 H(+). The enzyme catalyses 2 superoxide + 2 H(+) = H2O2 + O2. It catalyses the reaction H2O2 + AH2 = A + 2 H2O. Its function is as follows. Probable multifunctional globin with a hexacoordinated heme iron required for the catalysis of various reactions depending on redox condition of the cell as well as oxygen availability. Has a nitric oxide dioxygenase (NOD) activity and is most probably involved in cell-mediated and oxygen-dependent nitric oxide consumption. Under normoxic conditions functions as a nitric oxide dioxygenase (NOD) but under hypoxic conditions the globin may switch its function to that of a nitrite (NO2) reductase (NiR), generating nitric oxide. Could also have peroxidase and superoxide dismutase activities, detoxifying reactive oxygen species and protecting cells against oxidative stress. Also binds dioxygen with low affinity and could function as an oxygen sensor but has probably no function as a respiratory oxygen carrier. The protein is Cytoglobin-2 of Danio rerio (Zebrafish).